A 920-amino-acid chain; its full sequence is Anoctamin-4 (920 aa).

The Cytoplasmic portion of the chain corresponds to 1–323 (METSSSGITN…LYFAWLGWYT (323 aa)). Residues 38–64 (KDDDSLLHPGNLTSTSDDASRLEAGGE) are disordered. Residues 324-344 (GMLFPAAFIGLFVFLYGVITL) traverse the membrane as a helical segment. Residues 345–389 (DHCQVSKEVCQATDIIMCPVCDKYCPFMRLSDSCVYAKVTHLFDN) lie on the Extracellular side of the membrane. Residues 390–410 (GATVFFAVFMAVWATVFLEFW) form a helical membrane-spanning segment. At 411-470 (KRRRAVIAYDWDLIDWEEEEEEIRPQFEAKYSKKERMNPISGKPEPYQAFADKCSRLIVS) the chain is on the cytoplasmic side. The chain crosses the membrane as a helical span at residues 471–491 (ASGIFFMICVVIAAVFGIVIY). The Extracellular segment spans residues 492–512 (RVVTVSTFAAFKWALIRNNSQ). Residue asparagine 509 is glycosylated (N-linked (GlcNAc...) asparagine). A helical membrane pass occupies residues 513–533 (VATTGTAVCINFCIIMLLNVL). Over 534–560 (YEKVALLLTNLEQPRTESEWENSFTLK) the chain is Cytoplasmic. A helical transmembrane segment spans residues 561-581 (MFLFQFVNLNSSTFYIAFFLG). Topologically, residues 582–680 (RFTGHPGAYL…AYGLFDEYLE (99 aa)) are extracellular. The helical transmembrane segment at 681–701 (MILQFGFTTIFVAAFPLAPLL) threads the bilayer. At 702 to 733 (ALLNNIIEIRLDAYKFVTQWRRPLASRAKDIG) the chain is on the cytoplasmic side. The helical transmembrane segment at 734-754 (IWYGILEGIGILSVITNAFVI) threads the bilayer. The Extracellular segment spans residues 755–850 (AITSDFIPRL…QFWHVLAARL (96 aa)). Asparagine 789 and asparagine 802 each carry an N-linked (GlcNAc...) asparagine glycan. The helical transmembrane segment at 851–871 (AFIIVFEHLVFCIKHLISYLI) threads the bilayer. Over 872 to 920 (PDLPKDLRDRMRREKYLIQEMMYEAELERLQKERKERKKNGKAHHNEWP) the chain is Cytoplasmic.

It belongs to the anoctamin family.

The protein resides in the cell membrane. The catalysed reaction is a 1,2-diacyl-sn-glycero-3-phospho-L-serine(in) = a 1,2-diacyl-sn-glycero-3-phospho-L-serine(out). The enzyme catalyses a beta-D-galactosyl-(1&lt;-&gt;1')-N-acylsphing-4-enine(out) = a beta-D-galactosyl-(1&lt;-&gt;1')-N-acylsphing-4-enine(in). It catalyses the reaction a 1,2-diacyl-sn-glycero-3-phosphocholine(in) = a 1,2-diacyl-sn-glycero-3-phosphocholine(out). Functionally, has calcium-dependent phospholipid scramblase activity; scrambles phosphatidylserine, phosphatidylcholine and galactosylceramide. Does not exhibit calcium-activated chloride channel (CaCC) activity. This is Anoctamin-4 from Bos taurus (Bovine).